A 506-amino-acid chain; its full sequence is Apolipoprotein N-acyltransferase (506 aa).

Transmembrane regions (helical) follow at residues 10 to 30 (ANAK…AGWG), 33 to 53 (LALP…PLWW), 57 to 77 (VLAP…FYGS), 105 to 125 (IWLC…LLMA), 139 to 159 (WGVT…LWWI), 176 to 196 (LAGP…VTLS), and 205 to 225 (VGLA…SVRV). The 236-residue stretch at 238-473 (IQGNIPTREK…FVIYAATIFR (236 aa)) folds into the CN hydrolase domain. The active-site Proton acceptor is Glu-279. Lys-336 is an active-site residue. Residue Cys-385 is the Nucleophile of the active site. A helical membrane pass occupies residues 483-500 (YGDWLLPLLLGMLSLSVL).

It belongs to the CN hydrolase family. Apolipoprotein N-acyltransferase subfamily.

The protein resides in the cell inner membrane. The enzyme catalyses N-terminal S-1,2-diacyl-sn-glyceryl-L-cysteinyl-[lipoprotein] + a glycerophospholipid = N-acyl-S-1,2-diacyl-sn-glyceryl-L-cysteinyl-[lipoprotein] + a 2-acyl-sn-glycero-3-phospholipid + H(+). It participates in protein modification; lipoprotein biosynthesis (N-acyl transfer). In terms of biological role, catalyzes the phospholipid dependent N-acylation of the N-terminal cysteine of apolipoprotein, the last step in lipoprotein maturation. This chain is Apolipoprotein N-acyltransferase, found in Thermosynechococcus vestitus (strain NIES-2133 / IAM M-273 / BP-1).